The following is a 367-amino-acid chain: Ferredoxin--NADP reductase 2 (367 aa).

Residues D56, Q64, Y69, V109, F144, D309, and T350 each coordinate FAD.

The protein belongs to the ferredoxin--NADP reductase type 2 family. As to quaternary structure, homodimer. The cofactor is FAD.

The enzyme catalyses 2 reduced [2Fe-2S]-[ferredoxin] + NADP(+) + H(+) = 2 oxidized [2Fe-2S]-[ferredoxin] + NADPH. The chain is Ferredoxin--NADP reductase 2 from Cupriavidus metallidurans (strain ATCC 43123 / DSM 2839 / NBRC 102507 / CH34) (Ralstonia metallidurans).